We begin with the raw amino-acid sequence, 383 residues long: Spermidine/putrescine import ATP-binding protein PotA (383 aa).

The ABC transporter domain occupies 12–246; that stretch reads IALRDISKVY…PSTPFVAGFI (235 aa). Residue 48 to 55 coordinates ATP; sequence GPSGCGKT.

This sequence belongs to the ABC transporter superfamily. Spermidine/putrescine importer (TC 3.A.1.11.1) family. In terms of assembly, the complex is composed of two ATP-binding proteins (PotA), two transmembrane proteins (PotB and PotC) and a solute-binding protein (PotD).

It is found in the cell membrane. The catalysed reaction is ATP + H2O + polyamine-[polyamine-binding protein]Side 1 = ADP + phosphate + polyamineSide 2 + [polyamine-binding protein]Side 1.. Part of the ABC transporter complex PotABCD involved in spermidine/putrescine import. Responsible for energy coupling to the transport system. The sequence is that of Spermidine/putrescine import ATP-binding protein PotA from Acidothermus cellulolyticus (strain ATCC 43068 / DSM 8971 / 11B).